Here is a 538-residue protein sequence, read N- to C-terminus: Nicotinate phosphoribosyltransferase (538 aa).

Tyr21 and Thr210 together coordinate nicotinate. The residue at position 213 (His213) is a Phosphohistidine. A nicotinate-binding site is contributed by Arg318. Thr380 contributes to the 5-phospho-alpha-D-ribose 1-diphosphate binding site.

This sequence belongs to the NAPRTase family. In terms of assembly, homodimer. Requires Mg(2+) as cofactor. Mn(2+) serves as cofactor. Post-translationally, transiently phosphorylated on a His residue during the reaction cycle. Phosphorylation strongly increases the affinity for substrates and increases the rate of nicotinate D-ribonucleotide production. Dephosphorylation regenerates the low-affinity form of the enzyme, leading to product release.

The protein resides in the cytoplasm. The protein localises to the cytosol. It carries out the reaction nicotinate + 5-phospho-alpha-D-ribose 1-diphosphate + ATP + H2O = nicotinate beta-D-ribonucleotide + ADP + phosphate + diphosphate. It functions in the pathway cofactor biosynthesis; NAD(+) biosynthesis; nicotinate D-ribonucleotide from nicotinate: step 1/1. In terms of biological role, catalyzes the first step in the biosynthesis of NAD from nicotinic acid, the ATP-dependent synthesis of beta-nicotinate D-ribonucleotide from nicotinate and 5-phospho-D-ribose 1-phosphate. Helps prevent cellular oxidative stress via its role in NAD biosynthesis. This Rattus norvegicus (Rat) protein is Nicotinate phosphoribosyltransferase (Naprt).